Consider the following 229-residue polypeptide: Large ribosomal subunit protein uL1 (229 aa).

This sequence belongs to the universal ribosomal protein uL1 family. In terms of assembly, part of the 50S ribosomal subunit.

Functionally, binds directly to 23S rRNA. The L1 stalk is quite mobile in the ribosome, and is involved in E site tRNA release. Its function is as follows. Protein L1 is also a translational repressor protein, it controls the translation of the L11 operon by binding to its mRNA. This is Large ribosomal subunit protein uL1 from Streptococcus equi subsp. zooepidemicus (strain MGCS10565).